Reading from the N-terminus, the 95-residue chain is MANHPSAKKMIKVIKKRTMVNRMRKSRAHNYVKKFMAALAAGNKELMIETFKKAESNLHKCVNKKIIHRNTAARKISRMALKLKAFDLQQQAKAV.

Belongs to the bacterial ribosomal protein bS20 family.

Functionally, binds directly to 16S ribosomal RNA. The sequence is that of Small ribosomal subunit protein bS20 from Ehrlichia chaffeensis (strain ATCC CRL-10679 / Arkansas).